We begin with the raw amino-acid sequence, 1005 residues long: Ephrin type-A receptor 5 (1005 aa).

Residues 1–24 (MRGSGPRGAGRRRTQGRGGGGDTP) form a disordered region. The signal sequence occupies residues 1-26 (MRGSGPRGAGRRRTQGRGGGGDTPRV). Over 27–575 (PASLAGCYSA…GASNDQSQIP (549 aa)) the chain is Extracellular. The Eph LBD domain maps to 62 to 240 (EVNLLDSRTV…YYKKCPSVVR (179 aa)). N-linked (GlcNAc...) asparagine glycans are attached at residues N266, N301, N371, N425, N438, and N463. Fibronectin type-III domains lie at 359–469 (PPSA…TNQA) and 470–564 (APSP…TTPV). A helical transmembrane segment spans residues 576–596 (IIGVSVTVGVILLAVMIGFLL). The Cytoplasmic segment spans residues 597–1005 (SGSCCECGCG…MDAVAQVTLE (409 aa)). Phosphotyrosine; by autocatalysis occurs at positions 652 and 658. The Protein kinase domain maps to 677-938 (ITIERVIGAG…DIVNMLDKLI (262 aa)). ATP contacts are provided by residues 683-691 (IGAGEFGEV) and K709. D802 (proton acceptor) is an active-site residue. 2 positions are modified to phosphotyrosine; by autocatalysis: Y835 and Y984. The region spanning 967-1005 (GAYRSVGEWLEATKMGRYTEIFMENGYSSMDAVAQVTLE) is the SAM domain.

The protein belongs to the protein kinase superfamily. Tyr protein kinase family. Ephrin receptor subfamily. As to quaternary structure, heterotetramer upon binding of the ligand. The heterotetramer is composed of an ephrin dimer and a receptor dimer. Oligomerization is probably required to induce biological responses. Interacts (via SAM domain) with SAMD5 (via SAM domain). In terms of processing, phosphorylated. Phosphorylation is stimulated by the ligand EFNA5. Dephosphorylation upon stimulation by glucose, inhibits EPHA5 forward signaling and results in insulin secretion. In terms of tissue distribution, almost exclusively expressed in the nervous system. Predominantly expressed in neurons.

The protein resides in the cell membrane. It is found in the cell projection. Its subcellular location is the axon. The protein localises to the dendrite. It catalyses the reaction L-tyrosyl-[protein] + ATP = O-phospho-L-tyrosyl-[protein] + ADP + H(+). Receptor tyrosine kinase which binds promiscuously GPI-anchored ephrin-A family ligands residing on adjacent cells, leading to contact-dependent bidirectional signaling into neighboring cells. The signaling pathway downstream of the receptor is referred to as forward signaling while the signaling pathway downstream of the ephrin ligand is referred to as reverse signaling. Among GPI-anchored ephrin-A ligands, EFNA5 most probably constitutes the cognate/functional ligand for EPHA5. Functions as an axon guidance molecule during development and may be involved in the development of the retinotectal, entorhino-hippocampal and hippocamposeptal pathways. Together with EFNA5 plays also a role in synaptic plasticity in adult brain through regulation of synaptogenesis. In addition to its function in the nervous system, the interaction of EPHA5 with EFNA5 mediates communication between pancreatic islet cells to regulate glucose-stimulated insulin secretion. The polypeptide is Ephrin type-A receptor 5 (Epha5) (Rattus norvegicus (Rat)).